The chain runs to 1084 residues: CRISPR-associated endonuclease Cas9 (1084 aa).

The For RuvC-like nuclease domain role is filled by Asp-8. Positions 8, 496, and 500 each coordinate Mn(2+). Residues 504 to 665 form the HNH Cas9-type domain; it reads TEKRAREMDG…MDEEIDARSM (162 aa). His-573 acts as the Proton acceptor for HNH nuclease domain in catalysis. His-727 is a binding site for Mn(2+).

The protein belongs to the CRISPR-associated protein Cas9 family. Subtype II-C subfamily. As to quaternary structure, monomer. Binds crRNA and tracrRNA. Mg(2+) is required as a cofactor.

In terms of biological role, CRISPR (clustered regularly interspaced short palindromic repeat) is an adaptive immune system that provides protection against mobile genetic elements (viruses, transposable elements and conjugative plasmids). CRISPR clusters contain spacers, sequences complementary to antecedent mobile elements, and target invading nucleic acids. CRISPR clusters are transcribed and processed into CRISPR RNA (crRNA). In type II CRISPR systems correct processing of pre-crRNA requires a trans-encoded small RNA (tracrRNA), endogenous ribonuclease 3 (rnc) and this protein. The tracrRNA serves as a guide for ribonuclease 3-aided processing of pre-crRNA. Subsequently Cas9/crRNA/tracrRNA endonucleolytically cleaves linear or circular dsDNA target complementary to the spacer; Cas9 is inactive in the absence of the 2 guide RNAs (gRNA). Cas9 recognizes the protospacer adjacent motif (PAM) in the CRISPR repeat sequences to help distinguish self versus nonself, as targets within the bacterial CRISPR locus do not have PAMs. PAM recognition is also required for catalytic activity. The polypeptide is CRISPR-associated endonuclease Cas9 (Corynebacterium diphtheriae (strain ATCC 700971 / NCTC 13129 / Biotype gravis)).